Consider the following 278-residue polypeptide: Biotin synthase (278 aa).

A Radical SAM core domain is found at 1-227 (MQIMLCAISN…QSVVMVAGGR (227 aa)). Residues Cys16, Cys20, and Cys23 each coordinate [4Fe-4S] cluster. The [2Fe-2S] cluster site is built by Cys60, Cys95, and Cys153.

Belongs to the radical SAM superfamily. Biotin synthase family. Homodimer. [4Fe-4S] cluster serves as cofactor. It depends on [2Fe-2S] cluster as a cofactor.

It catalyses the reaction (4R,5S)-dethiobiotin + (sulfur carrier)-SH + 2 reduced [2Fe-2S]-[ferredoxin] + 2 S-adenosyl-L-methionine = (sulfur carrier)-H + biotin + 2 5'-deoxyadenosine + 2 L-methionine + 2 oxidized [2Fe-2S]-[ferredoxin]. The protein operates within cofactor biosynthesis; biotin biosynthesis; biotin from 7,8-diaminononanoate: step 2/2. Catalyzes the conversion of dethiobiotin (DTB) to biotin by the insertion of a sulfur atom into dethiobiotin via a radical-based mechanism. This chain is Biotin synthase, found in Campylobacter jejuni subsp. jejuni serotype O:23/36 (strain 81-176).